The chain runs to 968 residues: Isoleucine--tRNA ligase (968 aa).

The short motif at 68-78 is the 'HIGH' region element; sequence PYANGALHMGH. Residue Glu584 participates in L-isoleucyl-5'-AMP binding. A 'KMSKS' region motif is present at residues 625-629; the sequence is KMSKS. Residue Lys628 coordinates ATP. Residues Cys938, Cys941, Cys958, and Cys961 each coordinate Zn(2+).

It belongs to the class-I aminoacyl-tRNA synthetase family. IleS type 1 subfamily. As to quaternary structure, monomer. Zn(2+) serves as cofactor.

The protein resides in the cytoplasm. The catalysed reaction is tRNA(Ile) + L-isoleucine + ATP = L-isoleucyl-tRNA(Ile) + AMP + diphosphate. Its function is as follows. Catalyzes the attachment of isoleucine to tRNA(Ile). As IleRS can inadvertently accommodate and process structurally similar amino acids such as valine, to avoid such errors it has two additional distinct tRNA(Ile)-dependent editing activities. One activity is designated as 'pretransfer' editing and involves the hydrolysis of activated Val-AMP. The other activity is designated 'posttransfer' editing and involves deacylation of mischarged Val-tRNA(Ile). The protein is Isoleucine--tRNA ligase of Prochlorococcus marinus (strain MIT 9313).